The chain runs to 391 residues: Odorant receptor 67d (391 aa).

Over 1–45 (MLKMAKVEPVERYCKVIRMIRFCVGFCGNDVADPNFRMWWLTYAV) the chain is Cytoplasmic. A helical membrane pass occupies residues 46–66 (MAAIAFFFACTGYTIYVGVVI). Over 67–71 (NGDLT) the chain is Extracellular. The chain crosses the membrane as a helical span at residues 72–92 (IILQALAMVGSAVQGLTKLLV). Residues 93–140 (TANNASHMREVQNTYEDIYREYGSKGDEYAKCLEKRIRITWTLLIGFM) lie on the Cytoplasmic side of the membrane. A helical membrane pass occupies residues 141–161 (LVYIILLGLVITFPIFYLLIL). Topologically, residues 162 to 164 (HQK) are extracellular. A helical transmembrane segment spans residues 165–185 (VLVMQFLIPFLDHTTDGGHLI). The Cytoplasmic segment spans residues 186 to 191 (LTAAHV). A helical membrane pass occupies residues 192-212 (ILITFGGFGNYGGDMYLFLFV). The Extracellular segment spans residues 213-268 (THVPLIKDIFCVKLTEFNELVMKRNDFPKVRAMLCDLLVWHQLYTRMLQTTKKIYS). Residues 269-289 (IVLFVQLSTTCVGLLCTISCI) traverse the membrane as a helical segment. Residues 290 to 297 (FMKAWPAA) are Cytoplasmic-facing. A helical transmembrane segment spans residues 298–318 (PLYLLYAAITLYTFCGLGTLV). Residues 319–391 (ENSNEDFLSV…FSMMLMNYLG (73 aa)) lie on the Extracellular side of the membrane.

This sequence belongs to the insect chemoreceptor superfamily. Heteromeric odorant receptor channel (TC 1.A.69) family. Or67d subfamily. As to quaternary structure, interacts with Orco. Complexes exist early in the endomembrane system in olfactory sensory neurons (OSNs), coupling these complexes to the conserved ciliary trafficking pathway. In terms of tissue distribution, expressed in antenna.

It is found in the cell membrane. Its function is as follows. Plays a role in detection and sensitivity to pheromones and signal transduction of the fatty-acid-derived male pheromone 11-cis vaccenyl acetate (cVA). Acts in concert with Snmp and lush to capture cVA molecules on the surface of Or67d expressing olfactory dendrites and facilitate their transfer to the odorant-receptor Orco complex. Necessary to mediate behavioral responses to cVA by regulating both male and female mating behavior. Activation of Or67d neurons by cVA inhibits courtship of other males, whereas in females their activation promotes receptivity to other males. May form a complex with Orco to form odorant-sensing units, providing sensitive and prolonged odorant signaling and calcium permeability. The sequence is that of Odorant receptor 67d (Or67d) from Drosophila melanogaster (Fruit fly).